The primary structure comprises 356 residues: Putative methylthioribose-1-phosphate isomerase (356 aa).

Residues 57-59 (RGA), arginine 100, and glutamine 206 each bind substrate. The active-site Proton donor is aspartate 247. 257–258 (NK) lines the substrate pocket.

Belongs to the eIF-2B alpha/beta/delta subunits family. MtnA subfamily.

It catalyses the reaction 5-(methylsulfanyl)-alpha-D-ribose 1-phosphate = 5-(methylsulfanyl)-D-ribulose 1-phosphate. Catalyzes the interconversion of methylthioribose-1-phosphate (MTR-1-P) into methylthioribulose-1-phosphate (MTRu-1-P). The sequence is that of Putative methylthioribose-1-phosphate isomerase from Pyrococcus furiosus (strain ATCC 43587 / DSM 3638 / JCM 8422 / Vc1).